The following is a 310-amino-acid chain: tRNA-cytidine(32) 2-sulfurtransferase (310 aa).

Positions 45–50 match the PP-loop motif motif; the sequence is SGGKDS. [4Fe-4S] cluster is bound by residues Cys120, Cys123, and Cys211.

Belongs to the TtcA family. Homodimer. It depends on Mg(2+) as a cofactor. [4Fe-4S] cluster serves as cofactor.

It is found in the cytoplasm. The enzyme catalyses cytidine(32) in tRNA + S-sulfanyl-L-cysteinyl-[cysteine desulfurase] + AH2 + ATP = 2-thiocytidine(32) in tRNA + L-cysteinyl-[cysteine desulfurase] + A + AMP + diphosphate + H(+). Its pathway is tRNA modification. In terms of biological role, catalyzes the ATP-dependent 2-thiolation of cytidine in position 32 of tRNA, to form 2-thiocytidine (s(2)C32). The sulfur atoms are provided by the cysteine/cysteine desulfurase (IscS) system. This chain is tRNA-cytidine(32) 2-sulfurtransferase, found in Shewanella baltica (strain OS155 / ATCC BAA-1091).